A 279-amino-acid polypeptide reads, in one-letter code: Pantothenate synthetase (279 aa).

31-38 contacts ATP; sequence MGNLHGGH. The active-site Proton donor is histidine 38. Glutamine 62 is a binding site for (R)-pantoate. Glutamine 62 is a binding site for beta-alanine. An ATP-binding site is contributed by 150–153; that stretch reads GRKD. Glutamine 156 is a binding site for (R)-pantoate. ATP-binding positions include valine 179 and 187–190; that span reads KSSR.

The protein belongs to the pantothenate synthetase family. In terms of assembly, homodimer.

It localises to the cytoplasm. It catalyses the reaction (R)-pantoate + beta-alanine + ATP = (R)-pantothenate + AMP + diphosphate + H(+). It participates in cofactor biosynthesis; (R)-pantothenate biosynthesis; (R)-pantothenate from (R)-pantoate and beta-alanine: step 1/1. Functionally, catalyzes the condensation of pantoate with beta-alanine in an ATP-dependent reaction via a pantoyl-adenylate intermediate. The protein is Pantothenate synthetase of Stenotrophomonas maltophilia (strain K279a).